The sequence spans 1333 residues: DNA-directed RNA polymerase subunit beta' (1333 aa).

Residues C60, C62, C75, and C78 each contribute to the Zn(2+) site. Mg(2+) is bound by residues D535, D537, and D539. Zn(2+) is bound by residues C901, C983, C990, and C993.

Belongs to the RNA polymerase beta' chain family. In terms of assembly, the RNAP catalytic core consists of 2 alpha, 1 beta, 1 beta' and 1 omega subunit. When a sigma factor is associated with the core the holoenzyme is formed, which can initiate transcription. It depends on Mg(2+) as a cofactor. Zn(2+) serves as cofactor.

It catalyses the reaction RNA(n) + a ribonucleoside 5'-triphosphate = RNA(n+1) + diphosphate. Its function is as follows. DNA-dependent RNA polymerase catalyzes the transcription of DNA into RNA using the four ribonucleoside triphosphates as substrates. This chain is DNA-directed RNA polymerase subunit beta', found in Corynebacterium glutamicum (strain ATCC 13032 / DSM 20300 / JCM 1318 / BCRC 11384 / CCUG 27702 / LMG 3730 / NBRC 12168 / NCIMB 10025 / NRRL B-2784 / 534).